The primary structure comprises 295 residues: Polyprenyl transferase dpmaC (295 aa).

8 helical membrane passes run 39 to 59 (LFCVLAAYLFCGAGMVWNDWI), 84 to 104 (QAFVWMALQVIASCAVLHVML), 109 to 124 (VHVIPVMIASMLYPFL), 131 to 151 (KLHIYPQYMLAFTIAWPAIPG), 168 to 188 (YCLPLCTVVFFWTIYLNTAYS), 213 to 233 (LVLVALVCPILACLPLYLTQF), 237 to 257 (WLWVTWMGVWTAAFAVQLALF), and 271 to 291 (SNFVLGIWTIVVCSVELLLKA).

It belongs to the UbiA prenyltransferase family. The cofactor is Mg(2+).

Its subcellular location is the membrane. It participates in secondary metabolite biosynthesis; terpenoid biosynthesis. Its function is as follows. Polyprenyl transferase; part of the gene cluster that mediates the biosynthesis of the diterpenoid pyrones subglutinols A and B. The first step of the pathway is the synthesis of the alpha-pyrone moiety by the polyketide synthase dpmaA via condensation of one acetyl-CoA starter unit with 3 malonyl-CoA units and 2 methylations. The alpha-pyrone is then combined with geranylgeranyl pyrophosphate (GGPP) formed by the GGPP synthase dpmaD through the action of the prenyltransferase dpmaC to yield a linear alpha-pyrone diterpenoid. Subsequent steps in the diterpenoid pyrone biosynthetic pathway involve the decalin core formation, which is initiated by the epoxidation of the C10-C11 olefin by the FAD-dependent oxidoreductase dpmaE, and is followed by a cyclization cascade catalyzed by the terpene cyclase dpmaB. The dehydrogenase dpmaF is then involved in tetrahydrofuran (THF) ring formation at the C5 unit to complete the formation of subglutinols A and B. This Metarhizium anisopliae (Entomophthora anisopliae) protein is Polyprenyl transferase dpmaC.